The sequence spans 39 residues: Photosystem II reaction center protein L (39 aa).

The chain crosses the membrane as a helical span at residues 18-38 (SLYLGLLLIAVLGILFSSYFF).

The protein belongs to the PsbL family. PSII is composed of 1 copy each of membrane proteins PsbA, PsbB, PsbC, PsbD, PsbE, PsbF, PsbH, PsbI, PsbJ, PsbK, PsbL, PsbM, PsbT, PsbX, PsbY, PsbZ, Psb30/Ycf12, peripheral proteins PsbO, CyanoQ (PsbQ), PsbU, PsbV and a large number of cofactors. It forms dimeric complexes.

The protein localises to the cellular thylakoid membrane. Functionally, one of the components of the core complex of photosystem II (PSII). PSII is a light-driven water:plastoquinone oxidoreductase that uses light energy to abstract electrons from H(2)O, generating O(2) and a proton gradient subsequently used for ATP formation. It consists of a core antenna complex that captures photons, and an electron transfer chain that converts photonic excitation into a charge separation. This subunit is found at the monomer-monomer interface and is required for correct PSII assembly and/or dimerization. This chain is Photosystem II reaction center protein L, found in Picosynechococcus sp. (strain ATCC 27264 / PCC 7002 / PR-6) (Agmenellum quadruplicatum).